The following is a 218-amino-acid chain: RNA polymerase sigma-H factor (218 aa).

A Polymerase core binding motif is present at residues 62-75; the sequence is DIVQEGMIGLYKSI. Positions 182–201 form a DNA-binding region, H-T-H motif; that stretch reads YQEISDELNRHVKSIDNALQ.

This sequence belongs to the sigma-70 factor family. As to quaternary structure, interacts transiently with the RNAP core.

Its function is as follows. Sigma factors are initiation factors that promote the attachment of RNA polymerase (RNAP) to specific initiation sites and are then released. This sigma factor is involved in the transition to post-exponential phase in the beginning of sporulation. It is also required for transcription of several stationary phase genes. Association with the RNAP core increases rapidly in early exponential phase, and reamins constant expression level after. The chain is RNA polymerase sigma-H factor (sigH) from Bacillus subtilis (strain 168).